The following is a 282-amino-acid chain: CD320 antigen (282 aa).

Positions 1–35 are cleaved as a signal peptide; sequence MSGGWMAQVGAWRTGALGLALLLLLGLGLGLEAAA. Topologically, residues 36 to 229 are extracellular; the sequence is SPLSTPTSAQ…GDQSGSPTAY (194 aa). Residues 53–90 enclose the LDL-receptor class A 1 domain; it reads SCPPTKFQCRTSGLCVPLTWRCDRDLDCSDGSDEEECR. 3 disulfide bridges follow: Cys54–Cys67, Cys61–Cys80, and Cys74–Cys89. Positions 72, 75, 77, 79, 85, and 86 each coordinate Ca(2+). N-linked (GlcNAc...) asparagine glycosylation occurs at Asn126. Residues 131–168 enclose the LDL-receptor class A 2 domain; that stretch reads ACLAGELRCTLSDDCIPLTWRCDGHPDCPDSSDELGCG. 3 disulfide bridges follow: Cys132/Cys145, Cys139/Cys158, and Cys152/Cys167. Positions 150, 153, 155, 157, 163, and 164 each coordinate Ca(2+). 2 N-linked (GlcNAc...) asparagine glycosylation sites follow: Asn195 and Asn213. Residues 199–223 are disordered; the sequence is MGPPVTLESVPSVGNATSSSAGDQS. Residues 210-223 are compositionally biased toward polar residues; it reads SVGNATSSSAGDQS. The helical transmembrane segment at 230–250 threads the bilayer; sequence GVIAAAAVLSASLVTATLLLL. At 251 to 282 the chain is on the cytoplasmic side; that stretch reads SWLRAQERLRPLGLLVAMKESLLLSEQKTSLP.

As to quaternary structure, interacts (via LDL-receptor class A domains) with TCN2. In terms of tissue distribution, detected in the germinal center (GC) of lymphoid follicles (at protein level). Expressed abundantly on follicular dendritic cells (FDCs).

The protein localises to the cell membrane. In terms of biological role, receptor for transcobalamin saturated with cobalamin (TCbl). Plays an important role in cobalamin uptake. Plasma membrane protein that is expressed on follicular dendritic cells (FDC) and mediates interaction with germinal center B cells. Functions as costimulator to promote B cell responses to antigenic stimuli; promotes B cell differentiation and proliferation. Germinal center-B (GC-B) cells differentiate into memory B-cells and plasma cells (PC) through interaction with T-cells and follicular dendritic cells (FDC). CD320 augments the proliferation of PC precursors generated by IL-10. In Homo sapiens (Human), this protein is CD320 antigen (CD320).